A 175-amino-acid chain; its full sequence is FMN reductase (NADH) RutF (175 aa).

This sequence belongs to the non-flavoprotein flavin reductase family. RutF subfamily.

The enzyme catalyses FMNH2 + NAD(+) = FMN + NADH + 2 H(+). Catalyzes the reduction of FMN to FMNH2 which is used to reduce pyrimidine by RutA via the Rut pathway. This chain is FMN reductase (NADH) RutF, found in Serratia proteamaculans (strain 568).